The sequence spans 882 residues: Valine--tRNA ligase (882 aa).

A 'HIGH' region motif is present at residues 50 to 60 (PNVTGKLHLGH). Residues 526–530 (KMSKS) carry the 'KMSKS' region motif. Lysine 529 lines the ATP pocket. A coiled-coil region spans residues 810-881 (LEALIDLDLE…VLERIETLKE (72 aa)).

The protein belongs to the class-I aminoacyl-tRNA synthetase family. ValS type 1 subfamily. As to quaternary structure, monomer.

Its subcellular location is the cytoplasm. The catalysed reaction is tRNA(Val) + L-valine + ATP = L-valyl-tRNA(Val) + AMP + diphosphate. Its function is as follows. Catalyzes the attachment of valine to tRNA(Val). As ValRS can inadvertently accommodate and process structurally similar amino acids such as threonine, to avoid such errors, it has a 'posttransfer' editing activity that hydrolyzes mischarged Thr-tRNA(Val) in a tRNA-dependent manner. The polypeptide is Valine--tRNA ligase (Listeria innocua serovar 6a (strain ATCC BAA-680 / CLIP 11262)).